The primary structure comprises 394 residues: MQRHVFARNFRRLSLLRNPSLTKRFQSSASGAANTPNNNDEVMLLQQKLLYDEIRSELKSLSQVPEDEILPELKKSLEQDKLSDKEQQLEAELSDFFRNYALLNKLFDSKTLDGQSSTTTAAATPTKPYPNLIPSANDKPYSSQELFLRQLNHSMRTAKLGATISKVYYPHKDIFYPPLPENITVESLMSAGVHLGQSTSLWRSSTQSYIYGEYKGIHIIDLNQTLSYLKRAAKVVEGVSESGGIILFLGTRQGQKRGLEEAAKKTHGYYVSTRWIPGTLTNSTEISGIWEKQEIDSNDNPTERALSPNETSKQVKPDLLVVLNPTENRNALLEAIKSRVPTIAIIDTDSEPSLVTYPIPGNDDSLRSVNFLLGVLARAGQRGLQNRLARNNEK.

The N-terminal 25 residues, 1-25 (MQRHVFARNFRRLSLLRNPSLTKRF), are a transit peptide targeting the mitochondrion.

Belongs to the universal ribosomal protein uS2 family. As to quaternary structure, component of the mitochondrial small ribosomal subunit (mt-SSU). Mature yeast 74S mitochondrial ribosomes consist of a small (37S) and a large (54S) subunit. The 37S small subunit contains a 15S ribosomal RNA (15S mt-rRNA) and 34 different proteins. The 54S large subunit contains a 21S rRNA (21S mt-rRNA) and 46 different proteins.

It is found in the mitochondrion. Component of the mitochondrial ribosome (mitoribosome), a dedicated translation machinery responsible for the synthesis of mitochondrial genome-encoded proteins, including at least some of the essential transmembrane subunits of the mitochondrial respiratory chain. The mitoribosomes are attached to the mitochondrial inner membrane and translation products are cotranslationally integrated into the membrane. The polypeptide is Small ribosomal subunit protein uS2m (MRP4) (Saccharomyces cerevisiae (strain ATCC 204508 / S288c) (Baker's yeast)).